Here is a 739-residue protein sequence, read N- to C-terminus: Polyribonucleotide nucleotidyltransferase (739 aa).

2 residues coordinate Mg(2+): Asp514 and Asp520. The 60-residue stretch at 580–639 (PRIITVKIPVDKIGEVIGPKGKMINQIQEDTGADITIEDDGTIYIGAAQGSQAEAARATI) folds into the KH domain. The S1 motif domain occupies 651–723 (GERYLGTVVK…SRGKLSLIPV (73 aa)).

Belongs to the polyribonucleotide nucleotidyltransferase family. Requires Mg(2+) as cofactor.

Its subcellular location is the cytoplasm. It carries out the reaction RNA(n+1) + phosphate = RNA(n) + a ribonucleoside 5'-diphosphate. Functionally, involved in mRNA degradation. Catalyzes the phosphorolysis of single-stranded polyribonucleotides processively in the 3'- to 5'-direction. This Streptomyces coelicolor (strain ATCC BAA-471 / A3(2) / M145) protein is Polyribonucleotide nucleotidyltransferase.